Reading from the N-terminus, the 298-residue chain is tRNA pseudouridine synthase B (298 aa).

Aspartate 44 serves as the catalytic Nucleophile.

It belongs to the pseudouridine synthase TruB family. Type 1 subfamily.

It carries out the reaction uridine(55) in tRNA = pseudouridine(55) in tRNA. Its function is as follows. Responsible for synthesis of pseudouridine from uracil-55 in the psi GC loop of transfer RNAs. This chain is tRNA pseudouridine synthase B, found in Mycobacteroides abscessus (strain ATCC 19977 / DSM 44196 / CCUG 20993 / CIP 104536 / JCM 13569 / NCTC 13031 / TMC 1543 / L948) (Mycobacterium abscessus).